The following is a 439-amino-acid chain: Packaging protein 1 (439 aa).

Over residues methionine 1–proline 23 the composition is skewed to polar residues. The interval methionine 1 to lysine 42 is disordered. Position 151–158 (glycine 151–serine 158) interacts with ATP. The interval glutamate 419–threonine 439 is DNA-binding.

The protein belongs to the adenoviridae packaging protein 1 family. In terms of assembly, homodimer. Part of a genome packaging complex composed of packaging proteins 1, 2 and 3; this complex specifically binds to the packaging sequence on the left end of viral genomic DNA and performs packaging of the viral genome. Interacts with protein 33K.

Its subcellular location is the virion. The protein resides in the host nucleus. It is found in the host nucleoplasm. The protein localises to the host nucleolus. In terms of biological role, component of the packaging machinery which encapsidates the viral DNA into preformed capsids and transcriptional activator of the viral major late promoter (MLP). Binds, along with packaging proteins 2 and 3, to the specific packaging sequence on the left end of viral genomic DNA and displays ATPase activity thereby providing the power stroke of the packaging machinery. The activity of packaging protein IVa2 is stimulated by protein 33K which acts as a terminase. May be the protein that pumps DNA into the capsid powered by ATP hydrolysis. Specifically binds to the 5'-CG-3' nucleotides of the repeats making up the packaging sequence. Component of the DEF-A and DEF-B transcription factors that bind downstream elements of the major late promoter (MLP), and stimulate transcription from the MLP after initiation of viral DNA replication. DEF-A is a heterodimer packaging proteins 1 and 2 and DEF-B is a homodimer of packaging protein 1. This chain is Packaging protein 1, found in Fowl adenovirus A serotype 1 (strain CELO / Phelps) (FAdV-1).